We begin with the raw amino-acid sequence, 601 residues long: uncharacterized protein (601 aa).

3 consecutive transmembrane segments (helical) span residues 74 to 94 (IFFFVYYCKQALEFISTVFSI), 104 to 124 (VSFLLSFLLLFSLFLLIPNDG), and 531 to 551 (LVLLATIPVSLSSVFEVNYYY).

The protein resides in the endoplasmic reticulum membrane. This is an uncharacterized protein from Schizosaccharomyces pombe (strain 972 / ATCC 24843) (Fission yeast).